The primary structure comprises 229 residues: Endonuclease V (229 aa).

Mg(2+) is bound by residues Asp46 and Asp114.

It belongs to the endonuclease V family. Requires Mg(2+) as cofactor.

The protein localises to the cytoplasm. The enzyme catalyses Endonucleolytic cleavage at apurinic or apyrimidinic sites to products with a 5'-phosphate.. Functionally, DNA repair enzyme involved in the repair of deaminated bases. Selectively cleaves double-stranded DNA at the second phosphodiester bond 3' to a deoxyinosine leaving behind the intact lesion on the nicked DNA. In Streptomyces avermitilis (strain ATCC 31267 / DSM 46492 / JCM 5070 / NBRC 14893 / NCIMB 12804 / NRRL 8165 / MA-4680), this protein is Endonuclease V.